The primary structure comprises 291 residues: Elongation factor Ts (291 aa).

The interval 80 to 83 (TDFV) is involved in Mg(2+) ion dislocation from EF-Tu.

Belongs to the EF-Ts family.

It is found in the cytoplasm. Functionally, associates with the EF-Tu.GDP complex and induces the exchange of GDP to GTP. It remains bound to the aminoacyl-tRNA.EF-Tu.GTP complex up to the GTP hydrolysis stage on the ribosome. This is Elongation factor Ts from Acinetobacter baylyi (strain ATCC 33305 / BD413 / ADP1).